The following is a 335-amino-acid chain: Erlin-2 (335 aa).

At 1 to 2 (MS) the chain is on the cytoplasmic side. Residues 3 to 23 (HAGAIAAIGVALIAAALFSAI) form a helical membrane-spanning segment. Residues 24–335 (HKIEEGHVGV…ALNEPAVGDE (312 aa)) are Lumenal-facing. N-linked (GlcNAc...) asparagine glycosylation occurs at asparagine 106. Polar residues predominate over residues 310 to 321 (AGPSVQSATLLQ). The interval 310–335 (AGPSVQSATLLQDDSPALNEPAVGDE) is disordered.

The protein belongs to the band 7/mec-2 family.

It localises to the endoplasmic reticulum membrane. In terms of biological role, mediates the endoplasmic reticulum-associated degradation (ERAD) of inositol 1,4,5-trisphosphate receptors (IP3Rs). Promotes sterol-accelerated ERAD of HMGCR. Involved in regulation of cellular cholesterol homeostasis by regulation the SREBP signaling pathway. This is Erlin-2 (erlin2) from Xenopus tropicalis (Western clawed frog).